Here is a 201-residue protein sequence, read N- to C-terminus: UPF0177 protein YajF (201 aa).

5 helical membrane-spanning segments follow: residues 10–30 (TVIL…YVEY), 44–64 (ITVN…MLGI), 82–102 (ILIL…SQFI), 119–139 (VMGS…APIL), and 159–179 (FVFS…VFLI).

Belongs to the UPF0177 family.

It localises to the cell membrane. The sequence is that of UPF0177 protein YajF (yajF) from Lactococcus lactis subsp. lactis (strain IL1403) (Streptococcus lactis).